Here is a 396-residue protein sequence, read N- to C-terminus: Ribosomal RNA large subunit methyltransferase I (396 aa).

One can recognise a PUA domain in the interval 2–79 (SIRIKLKPGR…KEEAIDRDFF (78 aa)).

The protein belongs to the methyltransferase superfamily. RlmI family.

It localises to the cytoplasm. The enzyme catalyses cytidine(1962) in 23S rRNA + S-adenosyl-L-methionine = 5-methylcytidine(1962) in 23S rRNA + S-adenosyl-L-homocysteine + H(+). Functionally, specifically methylates the cytosine at position 1962 (m5C1962) of 23S rRNA. The chain is Ribosomal RNA large subunit methyltransferase I from Shewanella amazonensis (strain ATCC BAA-1098 / SB2B).